Here is a 2224-residue protein sequence, read N- to C-terminus: Multifunctional protein r (2224 aa).

Positions 1-369 (MASTDCYLAL…PQDTEFLFDV (369 aa)) are GATase (Glutamine amidotransferase). L-glutamine contacts are provided by S55, G240, and G242. Residues 195-380 (RIAILDCGLK…MESIQQKDLT (186 aa)) enclose the Glutamine amidotransferase type-1 domain. The active-site Nucleophile; for GATase activity is the C269. Positions 270, 273, 311, 313, and 314 each coordinate L-glutamine. Active-site for GATase activity residues include H353 and E355. A linker region spans residues 370 to 415 (FMESIQQKDLTIPQLIEQRLRPTTPAIDSAPVMPRKVLILGSGGLS). The interval 416–1470 (IGQAGEFDYS…KPPMKTHTDC (1055 aa)) is CPSase (Carbamoyl-phosphate synthase). Residues R525, R565, G571, G572, K602, E609, G635, I636, H637, Q678, and E692 each contribute to the ATP site. 2 ATP-grasp domains span residues 529-721 (AERV…KLAL) and 1066-1257 (SRML…RAIV). The Mg(2+) site is built by Q678, E692, and N694. 3 residues coordinate Mn(2+): Q678, E692, and N694. ATP is bound by residues R1102, K1141, L1143, E1148, G1173, V1174, H1175, S1176, Q1216, and E1228. 3 residues coordinate Mg(2+): Q1216, E1228, and N1230. Residues Q1216, E1228, and N1230 each coordinate Mn(2+). In terms of domain architecture, MGS-like spans 1322–1477 (FQIPKNAVLL…TDCMTSRRIV (156 aa)). Residues 1471–1484 (MTSRRIVKLPGFID) form a linker region. Positions 1485 to 1800 (VHVHLREPGA…GTKVKGRVHR (316 aa)) are DHOase (dihydroorotase). H1486 and H1488 together coordinate Zn(2+). Residues R1490 and N1520 each contribute to the (S)-dihydroorotate site. Zn(2+) is bound by residues K1571, H1605, C1628, H1629, and E1652. An N6-carboxylysine modification is found at K1571. (S)-dihydroorotate is bound at residue R1676. D1701 is a binding site for Zn(2+). D1701 functions as the For DHOase activity in the catalytic mechanism. H1705 and P1717 together coordinate (S)-dihydroorotate. The tract at residues 1801-1912 (VVLRGEVAFV…QRTTNSNPVA (112 aa)) is linker. The tract at residues 1821–1843 (GQNVRPKQSPLASEASQDLLPSD) is disordered. 4 positions are modified to phosphoserine: S1883, S1885, S1892, and S1894. An ATCase (Aspartate transcarbamylase) region spans residues 1913–2224 (HSLMGKHILA…MVVGGRNTAL (312 aa)). Residues R1970 and T1971 each contribute to the carbamoyl phosphate site. An L-aspartate-binding site is contributed by K1998. The carbamoyl phosphate site is built by R2019, H2047, and Q2050. Residues R2080 and R2141 each contribute to the L-aspartate site. Carbamoyl phosphate-binding residues include L2180 and P2181.

It in the N-terminal section; belongs to the CarA family. The protein in the 2nd section; belongs to the CarB family. In the 3rd section; belongs to the metallo-dependent hydrolases superfamily. DHOase family. CAD subfamily. This sequence in the C-terminal section; belongs to the aspartate/ornithine carbamoyltransferase superfamily. ATCase family. The cofactor is Mg(2+). Mn(2+) serves as cofactor. Zn(2+) is required as a cofactor.

It is found in the cytoplasm. It carries out the reaction hydrogencarbonate + L-glutamine + 2 ATP + H2O = carbamoyl phosphate + L-glutamate + 2 ADP + phosphate + 2 H(+). The catalysed reaction is L-glutamine + H2O = L-glutamate + NH4(+). It catalyses the reaction hydrogencarbonate + NH4(+) + 2 ATP = carbamoyl phosphate + 2 ADP + phosphate + 2 H(+). The enzyme catalyses carbamoyl phosphate + L-aspartate = N-carbamoyl-L-aspartate + phosphate + H(+). It carries out the reaction (S)-dihydroorotate + H2O = N-carbamoyl-L-aspartate + H(+). It participates in pyrimidine metabolism; UMP biosynthesis via de novo pathway; (S)-dihydroorotate from bicarbonate: step 1/3. The protein operates within pyrimidine metabolism; UMP biosynthesis via de novo pathway; (S)-dihydroorotate from bicarbonate: step 2/3. It functions in the pathway pyrimidine metabolism; UMP biosynthesis via de novo pathway; (S)-dihydroorotate from bicarbonate: step 3/3. Its function is as follows. Multifunctional protein that encodes the first 3 enzymatic activities of the de novo pyrimidine pathway: carbamoylphosphate synthetase (CPSase; EC 6.3.5.5), aspartate transcarbamylase (ATCase; EC 2.1.3.2) and dihydroorotase (DHOase; EC 3.5.2.3). The CPSase-function is accomplished in 2 steps, by a glutamine-dependent amidotransferase activity (GATase) that binds and cleaves glutamine to produce ammonia, followed by an ammonium-dependent carbamoyl phosphate synthetase, which reacts with the ammonia, hydrogencarbonate and ATP to form carbamoyl phosphate. The endogenously produced carbamoyl phosphate is sequestered and channeled to the ATCase active site. ATCase then catalyzes the formation of carbamoyl-L-aspartate from L-aspartate and carbamoyl phosphate. In the last step, DHOase catalyzes the cyclization of carbamoyl aspartate to dihydroorotate. This is Multifunctional protein r (r) from Drosophila melanogaster (Fruit fly).